A 313-amino-acid polypeptide reads, in one-letter code: Cobalamin biosynthesis protein CobD (313 aa).

The next 5 helical transmembrane spans lie at 52 to 72 (VAGA…GAAL), 79 to 99 (CWPV…TSLA), 154 to 174 (VVPL…YRAI), 204 to 224 (YVGA…VGGS), and 289 to 309 (AVVL…MLVY).

This sequence belongs to the CobD/CbiB family.

It is found in the cell membrane. Its pathway is cofactor biosynthesis; adenosylcobalamin biosynthesis. Converts cobyric acid to cobinamide by the addition of aminopropanol on the F carboxylic group. The protein is Cobalamin biosynthesis protein CobD of Mycobacterium bovis (strain ATCC BAA-935 / AF2122/97).